Consider the following 197-residue polypeptide: Large ribosomal subunit protein bL17 (197 aa).

Residues 120-197 (DVPPADTGQG…EEEESEEDNT (78 aa)) form a disordered region. The segment covering 127–136 (GQGGSGGTRR) has biased composition (gly residues). A compositionally biased stretch (acidic residues) spans 159–197 (SSDEESESVEEDEATAEEASADAEQGEAEEEEESEEDNT).

The protein belongs to the bacterial ribosomal protein bL17 family. As to quaternary structure, part of the 50S ribosomal subunit. Contacts protein L32.

This chain is Large ribosomal subunit protein bL17, found in Salinibacter ruber (strain DSM 13855 / M31).